A 310-amino-acid polypeptide reads, in one-letter code: Putative dihydroorotate dehydrogenase A (fumarate) (310 aa).

Substrate contacts are provided by residues K45, 69–73 (NSMGL), and N128. 45–46 (KT) contacts FMN. N128 lines the FMN pocket. C131 acts as the Nucleophile in catalysis. K165 and V193 together coordinate FMN. 194–195 (NS) provides a ligand contact to substrate. FMN contacts are provided by residues G220, 248-249 (GG), and 270-271 (GT).

Belongs to the dihydroorotate dehydrogenase family. Type 1 subfamily. In terms of assembly, homodimer. FMN is required as a cofactor.

The protein resides in the cytoplasm. It carries out the reaction (S)-dihydroorotate + fumarate = orotate + succinate. Its pathway is pyrimidine metabolism; UMP biosynthesis via de novo pathway. Functionally, catalyzes the conversion of dihydroorotate to orotate with fumarate as the electron acceptor. The protein is Putative dihydroorotate dehydrogenase A (fumarate) (pyrD) of Streptococcus agalactiae serotype Ia (strain ATCC 27591 / A909 / CDC SS700).